We begin with the raw amino-acid sequence, 574 residues long: MELENFVANNLLLKARLGFNKQTGRSKKWRELLKFPPVSMCTELRWSIEKDFSSLCDKQPIGRLLFRQFCDTKPDLKRCIEFLDAVAEYEVTIEEEQREFGLAIFSRFFKEKSEVPLPEIPPDIVKECKWNLKQNSPSQNVFEECAGIVCKYLSETPFEEYQESTYFNRFLQWKWLERRPVTKNTFRQYRVLGKGGFGEVCACQVRATGKMYACKKLEKKRIKKRKGEAMALNEKRILEKLHSRFVVSLAYTYETKDALCLVLTIMNGGDLKYHIYNLGDPGFEEPRAVFYAAELCCGLEDLQRKRIVYRDLKPENILLDDHGHIRISDLGLAMEVPEGEMVRGRVGTVGYMAPEIINHEKYTFSPDWWGLGCLIYEMIAGHSPFRKYKEKVNREELERRVKNETEEYSERFSEDAKSICSMLLIKDPSKRLGCQRDGVSAVKQHPIFKDINFSRLEANMLDPPFIPDPQAIYCRNILDIGQFSVVKGVNLDTNDEIFYAEFATGSVTIPWQNEMIESGCFKDLNENEDDLSSLEKYKMCSSILRPKRNFFRRLFRRTGCLNIALSEEREPTEH.

N-acetylmethionine is present on methionine 1. Residues 1 to 153 (MELENFVANN…ECAGIVCKYL (153 aa)) are N-terminal. Residues 51–171 (DFSSLCDKQP…QESTYFNRFL (121 aa)) form the RGS domain. Positions 186–448 (FRQYRVLGKG…VSAVKQHPIF (263 aa)) constitute a Protein kinase domain. ATP is bound by residues 192–200 (LGKGGFGEV) and lysine 215. Aspartate 311 acts as the Proton acceptor in catalysis. The AGC-kinase C-terminal domain maps to 449–514 (KDINFSRLEA…GSVTIPWQNE (66 aa)). Serine 484 carries the post-translational modification Phosphoserine.

The protein belongs to the protein kinase superfamily. AGC Ser/Thr protein kinase family. GPRK subfamily. Interacts with DRD3. Post-translationally, palmitoylated.

The protein resides in the cytoplasm. The protein localises to the cell cortex. The catalysed reaction is [G-protein-coupled receptor] + ATP = [G-protein-coupled receptor]-phosphate + ADP + H(+). Inhibited by heparin. Functionally, specifically phosphorylates the activated forms of G protein-coupled receptors. The protein is G protein-coupled receptor kinase 4 (Grk4) of Mus musculus (Mouse).